The chain runs to 186 residues: Lipid A palmitoyltransferase PagP (186 aa).

The N-terminal stretch at 1 to 25 is a signal peptide; it reads MKVSKYVAIFFFVFIQLISVGKVFA. Active-site residues include histidine 58, aspartate 101, and serine 102.

It belongs to the lipid A palmitoyltransferase family. As to quaternary structure, homodimer.

The protein localises to the cell outer membrane. The enzyme catalyses lipid A (E. coli) + a 1-hexadecanoyl-2-acyl-sn-glycero-3-phosphocholine = hepta-acyl lipid A (E. coli) + a 2-acyl-sn-glycero-3-phosphocholine. It carries out the reaction lipid IIA + a 1-hexadecanoyl-2-acyl-sn-glycero-3-phosphocholine = lipid IIB + a 2-acyl-sn-glycero-3-phosphocholine. The catalysed reaction is lipid IVA (E. coli) + a 1-hexadecanoyl-2-acyl-sn-glycero-3-phosphocholine = lipid IVB (E. coli) + a 2-acyl-sn-glycero-3-phosphocholine. Transfers a palmitate residue from the sn-1 position of a phospholipid to the N-linked hydroxymyristate on the proximal unit of lipid A or its precursors. The sequence is that of Lipid A palmitoyltransferase PagP from Escherichia coli O6:K15:H31 (strain 536 / UPEC).